We begin with the raw amino-acid sequence, 378 residues long: Glutamate 5-kinase (378 aa).

An ATP-binding site is contributed by Lys-19. Substrate-binding residues include Ser-59, Asp-146, and Asn-158. Residue 178-179 (TD) coordinates ATP. The 79-residue stretch at 285 to 363 (RGSVTVDPGA…SEFEKLLGYT (79 aa)) folds into the PUA domain.

The protein belongs to the glutamate 5-kinase family.

It localises to the cytoplasm. It carries out the reaction L-glutamate + ATP = L-glutamyl 5-phosphate + ADP. Its pathway is amino-acid biosynthesis; L-proline biosynthesis; L-glutamate 5-semialdehyde from L-glutamate: step 1/2. In terms of biological role, catalyzes the transfer of a phosphate group to glutamate to form L-glutamate 5-phosphate. The sequence is that of Glutamate 5-kinase from Polaromonas naphthalenivorans (strain CJ2).